The chain runs to 95 residues: UPF0213 protein YPA_2977 (95 aa).

Positions 4-79 (SLWHLYLLRT…KQLSKQQKEK (76 aa)) constitute a GIY-YIG domain.

This sequence belongs to the UPF0213 family.

This chain is UPF0213 protein YPA_2977, found in Yersinia pestis bv. Antiqua (strain Antiqua).